Consider the following 261-residue polypeptide: Polycomb group RING finger protein 1 (261 aa).

The RING-type zinc-finger motif lies at 45–84 (CYLCAGYFIDATTITECLHTFCKSCIVKYLQTSKYCPMCN).

In terms of assembly, component of a PRC1-like complex.

Its subcellular location is the nucleus. In terms of biological role, component of a Polycomb group (PcG) multiprotein PRC1-like complex, a complex class required to maintain the transcriptionally repressive state of many genes, including Hox genes, throughout development. PcG PRC1 complex acts via chromatin remodeling and modification of histones; it mediates monoubiquitination of histone H2A 'Lys-119', rendering chromatin heritably changed in its expressibility. The chain is Polycomb group RING finger protein 1 (pcgf1) from Danio rerio (Zebrafish).